The primary structure comprises 1137 residues: Phytochrome C (1137 aa).

Over residues 1–18 (MSSSRSNNRATCSRSSSA) the composition is skewed to low complexity. Residues 1 to 27 (MSSSRSNNRATCSRSSSARSKHSARVV) form a disordered region. One can recognise a GAF domain in the interval 217-400 (NLSLLCDVLV…VFGIQINKEV (184 aa)). Cysteine 322 contacts phytochromobilin. PAS domains are found at residues 620 to 690 (VTNE…LQGI) and 750 to 824 (IQGD…TKLS). Residues 904-1124 (YIRQELRNPL…IVLVEFPVAQ (221 aa)) form the Histidine kinase domain.

It belongs to the phytochrome family. Homodimer. In terms of processing, contains one covalently linked phytochromobilin chromophore.

Its function is as follows. Regulatory photoreceptor which exists in two forms that are reversibly interconvertible by light: the Pr form that absorbs maximally in the red region of the spectrum and the Pfr form that absorbs maximally in the far-red region. Photoconversion of Pr to Pfr induces an array of morphogenic responses, whereas reconversion of Pfr to Pr cancels the induction of those responses. Pfr controls the expression of a number of nuclear genes including those encoding the small subunit of ribulose-bisphosphate carboxylase, chlorophyll A/B binding protein, protochlorophyllide reductase, rRNA, etc. It also controls the expression of its own gene(s) in a negative feedback fashion. The chain is Phytochrome C (PHYC) from Oryza sativa subsp. japonica (Rice).